The chain runs to 155 residues: Arginine repressor (155 aa).

The protein belongs to the ArgR family.

It localises to the cytoplasm. It participates in amino-acid biosynthesis; L-arginine biosynthesis [regulation]. Regulates arginine biosynthesis genes. This chain is Arginine repressor, found in Histophilus somni (strain 129Pt) (Haemophilus somnus).